The chain runs to 281 residues: Pantothenate synthetase (281 aa).

30-37 (MGNLHQGH) is an ATP binding site. The Proton donor role is filled by histidine 37. Glutamine 61 contributes to the (R)-pantoate binding site. Residue glutamine 61 participates in beta-alanine binding. 149 to 152 (GNKD) contributes to the ATP binding site. A (R)-pantoate-binding site is contributed by glutamine 155. Residues isoleucine 178 and 186–189 (MSSR) contribute to the ATP site.

The protein belongs to the pantothenate synthetase family. Homodimer.

The protein localises to the cytoplasm. The catalysed reaction is (R)-pantoate + beta-alanine + ATP = (R)-pantothenate + AMP + diphosphate + H(+). It functions in the pathway cofactor biosynthesis; (R)-pantothenate biosynthesis; (R)-pantothenate from (R)-pantoate and beta-alanine: step 1/1. In terms of biological role, catalyzes the condensation of pantoate with beta-alanine in an ATP-dependent reaction via a pantoyl-adenylate intermediate. This Shewanella baltica (strain OS185) protein is Pantothenate synthetase.